A 468-amino-acid chain; its full sequence is UDP-N-acetylmuramate--L-alanine ligase (468 aa).

121–127 (GSHGKTT) contacts ATP.

The protein belongs to the MurCDEF family.

It localises to the cytoplasm. The enzyme catalyses UDP-N-acetyl-alpha-D-muramate + L-alanine + ATP = UDP-N-acetyl-alpha-D-muramoyl-L-alanine + ADP + phosphate + H(+). The protein operates within cell wall biogenesis; peptidoglycan biosynthesis. Its function is as follows. Cell wall formation. This is UDP-N-acetylmuramate--L-alanine ligase from Borreliella burgdorferi (strain ATCC 35210 / DSM 4680 / CIP 102532 / B31) (Borrelia burgdorferi).